A 303-amino-acid chain; its full sequence is MEAAITQRIQYPSWVDCRKVECKPQRGSLRYSQQVKVDRRFRGLSLARLQPERRNDQRRAVSPAVSCSDNNSSALLETGSVYPFDEDILKRKAEEVKPYLNGRSMYLVGMMGSGKTTVGKLMSKVLGYTFFDCDTLIEQAMNGTSVAEIFVHHGENFFRGKETDALKKLSSRYQVVVSTGGGAVIRPINWKYMHKGISIWLDVPLEALAHRIAAVGTDSRPLLHDESGDAYSVAFKRLSAIWDERGEAYTNANARVSLENIAAKRGYKNVSDLTPTEIAIEAFEQVLSFLEKEETMEIPDGDL.

Residues 1–66 (MEAAITQRIQ…QRRAVSPAVS (66 aa)) constitute a chloroplast transit peptide. 109 to 116 (GMMGSGKT) contacts ATP. Thr-116 is a Mg(2+) binding site. Substrate-binding residues include Asp-134, Arg-159, and Gly-181. Arg-220 contacts ATP.

This sequence belongs to the shikimate kinase family. As to quaternary structure, homodimer. The cofactor is Mg(2+).

The protein localises to the plastid. It localises to the chloroplast. It catalyses the reaction shikimate + ATP = 3-phosphoshikimate + ADP + H(+). The protein operates within metabolic intermediate biosynthesis; chorismate biosynthesis; chorismate from D-erythrose 4-phosphate and phosphoenolpyruvate: step 5/7. Functionally, catalyzes the specific phosphorylation of the 3-hydroxyl group of shikimic acid using ATP as a cosubstrate. This Arabidopsis thaliana (Mouse-ear cress) protein is Shikimate kinase 1, chloroplastic (SK1).